The following is a 163-amino-acid chain: Peptide methionine sulfoxide reductase MsrA 1 (163 aa).

Residue Cys-21 is part of the active site.

The protein belongs to the MsrA Met sulfoxide reductase family.

The enzyme catalyses L-methionyl-[protein] + [thioredoxin]-disulfide + H2O = L-methionyl-(S)-S-oxide-[protein] + [thioredoxin]-dithiol. It carries out the reaction [thioredoxin]-disulfide + L-methionine + H2O = L-methionine (S)-S-oxide + [thioredoxin]-dithiol. In terms of biological role, has an important function as a repair enzyme for proteins that have been inactivated by oxidation. Catalyzes the reversible oxidation-reduction of methionine sulfoxide in proteins to methionine. The sequence is that of Peptide methionine sulfoxide reductase MsrA 1 (msrA1) from Nostoc sp. (strain PCC 7120 / SAG 25.82 / UTEX 2576).